We begin with the raw amino-acid sequence, 945 residues long: Bifunctional glutamine synthetase adenylyltransferase/adenylyl-removing enzyme (945 aa).

Residues methionine 1 to serine 441 are adenylyl removase. The interval tyrosine 450 to glycine 945 is adenylyl transferase.

It belongs to the GlnE family. Mg(2+) is required as a cofactor.

It catalyses the reaction [glutamine synthetase]-O(4)-(5'-adenylyl)-L-tyrosine + phosphate = [glutamine synthetase]-L-tyrosine + ADP. The catalysed reaction is [glutamine synthetase]-L-tyrosine + ATP = [glutamine synthetase]-O(4)-(5'-adenylyl)-L-tyrosine + diphosphate. Its function is as follows. Involved in the regulation of glutamine synthetase GlnA, a key enzyme in the process to assimilate ammonia. When cellular nitrogen levels are high, the C-terminal adenylyl transferase (AT) inactivates GlnA by covalent transfer of an adenylyl group from ATP to specific tyrosine residue of GlnA, thus reducing its activity. Conversely, when nitrogen levels are low, the N-terminal adenylyl removase (AR) activates GlnA by removing the adenylyl group by phosphorolysis, increasing its activity. The regulatory region of GlnE binds the signal transduction protein PII (GlnB) which indicates the nitrogen status of the cell. The chain is Bifunctional glutamine synthetase adenylyltransferase/adenylyl-removing enzyme from Serratia proteamaculans (strain 568).